A 37-amino-acid polypeptide reads, in one-letter code: Hemextin A (37 aa).

As to quaternary structure, heterotetramer composed of two A and two B chains; non-covalently linked. Does not exist as a complex in the crude venom. May contain several disulfide bonds. As to expression, expressed by the venom gland.

It is found in the secreted. Hemextin A (monomer): exhibits mild anticoagulant activity. It specifically inhibits the activation of FX (F10) by the TF-FVIIa complex (extrinsic tenase complex (ETC)) by non-competitively inhibiting the enzymatic activity of FVIIa. In terms of biological role, hemextin AB complex: specifically inhibits the activation of FX (F10) by the TF-FVIIa complex (extrinsic tenase complex (ETC)) (IC(50)= 100 nM, Ki=25 nM) by non-competitively inhibiting the enzymatic activity of FVIIa. The polypeptide is Hemextin A (Hemachatus haemachatus (Rinkhals)).